We begin with the raw amino-acid sequence, 373 residues long: Putative F-box/kelch-repeat protein At3g19410 (373 aa).

Positions 1-46 (MTIPELPKDLIEEILCYVPATYLKRLRSTCKGWNRLFKDDRRFAKK) constitute an F-box domain. Kelch repeat units follow at residues 101 to 148 (RIFH…FVLG), 149 to 200 (YYQE…QCVS), and 329 to 373 (KLYI…EEKS).

The protein is Putative F-box/kelch-repeat protein At3g19410 of Arabidopsis thaliana (Mouse-ear cress).